Consider the following 21-residue polypeptide: Fibrinogen beta chain (21 aa).

Position 1 is a pyrrolidone carboxylic acid (Q1). Acidic residues predominate over residues 1–11; sequence QPSYDYDEEED. The segment at 1 to 21 is disordered; that stretch reads QPSYDYDEEEDDRAKLRLDAR. Residue Y6 is modified to Sulfotyrosine. Over residues 12–21 the composition is skewed to basic and acidic residues; that stretch reads DRAKLRLDAR.

Heterohexamer; disulfide linked. Contains 2 sets of 3 non-identical chains (alpha, beta and gamma). The 2 heterotrimers are in head to head conformation with the N-termini in a small central domain. Post-translationally, conversion of fibrinogen to fibrin is triggered by thrombin, which cleaves fibrinopeptides A and B from alpha and beta chains, and thus exposes the N-terminal polymerization sites responsible for the formation of the soft clot.

The protein resides in the secreted. Functionally, cleaved by the protease thrombin to yield monomers which, together with fibrinogen alpha (FGA) and fibrinogen gamma (FGG), polymerize to form an insoluble fibrin matrix. Fibrin has a major function in hemostasis as one of the primary components of blood clots. In addition, functions during the early stages of wound repair to stabilize the lesion and guide cell migration during re-epithelialization. Was originally thought to be essential for platelet aggregation, based on in vitro studies using anticoagulated blood. However subsequent studies have shown that it is not absolutely required for thrombus formation in vivo. Enhances expression of SELP in activated platelets. Maternal fibrinogen is essential for successful pregnancy. Fibrin deposition is also associated with infection, where it protects against IFNG-mediated hemorrhage. May also facilitate the antibacterial immune response via both innate and T-cell mediated pathways. This chain is Fibrinogen beta chain (FGB), found in Antilocapra americana (Pronghorn).